We begin with the raw amino-acid sequence, 65 residues long: MRCVPVFIILLLLIPSAPSVDAQRKTKDDVPLASFHDNAKRTLKRLWNKRSCCPQEFLCCLYLVK.

An N-terminal signal peptide occupies residues Met-1 to Ala-22. Residues Gln-23–Arg-50 constitute a propeptide that is removed on maturation.

This sequence belongs to the conotoxin T superfamily. Contains 2 disulfide bonds that can be either 'C1-C3, C2-C4' or 'C1-C4, C2-C3', since these disulfide connectivities have been observed for conotoxins with cysteine framework V (for examples, see AC P0DQQ7 and AC P81755). In terms of tissue distribution, expressed by the venom duct.

The protein localises to the secreted. The polypeptide is Conotoxin Lp5.1 (Conus leopardus (Leopard cone)).